Here is a 376-residue protein sequence, read N- to C-terminus: Succinyl-diaminopimelate desuccinylase (376 aa).

Zn(2+) is bound at residue H66. The active site involves D68. D99 serves as a coordination point for Zn(2+). E133 serves as the catalytic Proton acceptor. Residues E134, E162, and H348 each contribute to the Zn(2+) site.

Belongs to the peptidase M20A family. DapE subfamily. As to quaternary structure, homodimer. It depends on Zn(2+) as a cofactor. Co(2+) serves as cofactor.

The catalysed reaction is N-succinyl-(2S,6S)-2,6-diaminopimelate + H2O = (2S,6S)-2,6-diaminopimelate + succinate. The protein operates within amino-acid biosynthesis; L-lysine biosynthesis via DAP pathway; LL-2,6-diaminopimelate from (S)-tetrahydrodipicolinate (succinylase route): step 3/3. Functionally, catalyzes the hydrolysis of N-succinyl-L,L-diaminopimelic acid (SDAP), forming succinate and LL-2,6-diaminopimelate (DAP), an intermediate involved in the bacterial biosynthesis of lysine and meso-diaminopimelic acid, an essential component of bacterial cell walls. The chain is Succinyl-diaminopimelate desuccinylase from Nitrosococcus oceani (strain ATCC 19707 / BCRC 17464 / JCM 30415 / NCIMB 11848 / C-107).